We begin with the raw amino-acid sequence, 477 residues long: D(1B) dopamine receptor (477 aa).

The Extracellular segment spans residues 1–39; that stretch reads MLPPGSNGTAYPGQFALYQQLAQGNAVGGSAGAPPLGPS. N-linked (GlcNAc...) asparagine glycosylation occurs at asparagine 7. Residues 40–66 form a helical membrane-spanning segment; the sequence is QVVTACLLTLLIIWTLLGNVLVCAAIV. At 67–77 the chain is on the cytoplasmic side; it reads RSRHLRANMTN. Residues 78–104 traverse the membrane as a helical segment; the sequence is VFIVSLAVSDLFVALLVMPWKAVAEVA. The Extracellular portion of the chain corresponds to 105–114; that stretch reads GYWPFGAFCD. A disulfide bridge connects residues cysteine 113 and cysteine 217. The helical transmembrane segment at 115-136 threads the bilayer; the sequence is VWVAFDIMCSTASILNLCVISV. The Cytoplasmic portion of the chain corresponds to 137 to 158; sequence DRYWAISRPFRYKRKMTQRMAL. The chain crosses the membrane as a helical span at residues 159 to 180; the sequence is VMVGLAWTLSILISFIPVQLNW. Over 181–223 the chain is Extracellular; it reads HRDQAASWGGLDLPNNLANWTPWEEDFWEPDVNAENCDSSLNR. Asparagine 222 carries N-linked (GlcNAc...) asparagine glycosylation. A helical transmembrane segment spans residues 224–246; the sequence is TYAISSSLISFYIPVAIMIVTYT. The Cytoplasmic portion of the chain corresponds to 247-296; that stretch reads RIYRIAQVQIRRISSLERAAEHAQSCRSSAACAPDTSLRASIKKETKVLK. A helical transmembrane segment spans residues 297–320; that stretch reads TLSVIMGVFVCCWLPFFILNCMVP. Topologically, residues 321–340 are extracellular; the sequence is FCSGHPEGPPAGFPCVSETT. Residues 341 to 360 form a helical membrane-spanning segment; sequence FDVFVWFGWANSSLNPVIYA. Residues 361–477 are Cytoplasmic-facing; sequence FNADFQKVFA…ITPFTPNGFH (117 aa). Cysteine 375 is lipidated: S-palmitoyl cysteine.

This sequence belongs to the G-protein coupled receptor 1 family. Neuron-specific, localized primarily within limbic regions of the brain.

The protein resides in the cell membrane. Functionally, dopamine receptor whose activity is mediated by G proteins which activate adenylyl cyclase. This chain is D(1B) dopamine receptor (DRD5), found in Homo sapiens (Human).